The sequence spans 368 residues: Phospho-N-acetylmuramoyl-pentapeptide-transferase (368 aa).

The next 10 membrane-spanning stretches (helical) occupy residues 32-52, 79-99, 102-122, 142-160, 176-196, 207-227, 244-264, 271-291, 296-316, and 345-365; these read TGGAVVTGALFVFLFGPWIID, TPTMGGLMILSGLVVSTVLWA, LNPYVWIVLAVTLGFGLIGFY, LLLELLIALAACYALTRLG, VALDLGWFFLGFGAFIIVGAG, GLAIVPVMIAAASFAMIAYLA, AGELAVLCGAVLGAGLGFLWF, IFMGDTGSLALGGMLGSIAVA, IVLAVIGGLFVLEAVSVIVQV, and QIVIRFWIISVMLALAGLSTL.

Belongs to the glycosyltransferase 4 family. MraY subfamily. The cofactor is Mg(2+).

It is found in the cell inner membrane. It carries out the reaction UDP-N-acetyl-alpha-D-muramoyl-L-alanyl-gamma-D-glutamyl-meso-2,6-diaminopimeloyl-D-alanyl-D-alanine + di-trans,octa-cis-undecaprenyl phosphate = di-trans,octa-cis-undecaprenyl diphospho-N-acetyl-alpha-D-muramoyl-L-alanyl-D-glutamyl-meso-2,6-diaminopimeloyl-D-alanyl-D-alanine + UMP. It functions in the pathway cell wall biogenesis; peptidoglycan biosynthesis. In terms of biological role, catalyzes the initial step of the lipid cycle reactions in the biosynthesis of the cell wall peptidoglycan: transfers peptidoglycan precursor phospho-MurNAc-pentapeptide from UDP-MurNAc-pentapeptide onto the lipid carrier undecaprenyl phosphate, yielding undecaprenyl-pyrophosphoryl-MurNAc-pentapeptide, known as lipid I. This Nitrobacter winogradskyi (strain ATCC 25391 / DSM 10237 / CIP 104748 / NCIMB 11846 / Nb-255) protein is Phospho-N-acetylmuramoyl-pentapeptide-transferase.